Here is a 683-residue protein sequence, read N- to C-terminus: MTEATKEDVTAAQLLTAPVGHDGARKGMDVDILDVEELRDWQRRKRSEFEEALKRNRLDVRQWLRYAAFEYEQRDMRRARSVFERALAVAPGDVVVWLRYVDCELRARDVNHARNLLVRATALLPRVDKLWYKYVLMEESLGQVELVRGVYTKWCTLEPAAAAWDAFVDFETRQGQVEHVREVYSRYVMVHPVAATWLKWVAFERKHGDAGTVRRVYSLACDTLTAFAGADVHEVEQLVVSFAEWEATQQELERSRAVLSVAVSRWPESSTLKDATAQLEKKFGGARAGESILFKRKREYEEQLLAHPLDYDAWWLYLDLLEESFPAELRAALAEATVKAVPRSQEKDMQWRKYVNLWLRYLLFLETVLVDSDLTRSMYQKLVREVIPNTKFTFAKAWIMYAEFEIRQEKLDKARKILGMSLGMCPKPKLFQYYIDLEIKLKEFDRVRRLHEKLLEFQPDVLSNWIEYAELEENLGDEDRARGIYEIGLTADGGLSQARQLQLMQRYIQFETDASEFERARALYSRYVALSGYDPNVWISCALYESSVPTAAQVASYAHDQPNSDGDDSDDAYEQEFELTEENKEQTRAIFEKALRHYTSEKDDEGRILVLQAYKDYESIHGSAEARQKIASRQPRKVTRKRTVDGIEKEYVAYEFPDDTVSTSSVASKFVSLAQRWKQQQAP.

13 HAT repeats span residues 40 to 72, 74 to 106, 108 to 140, 142 to 173, 175 to 206, 291 to 323, 336 to 367, 374 to 407, 409 to 440, 442 to 474, 476 to 513, 515 to 547, and 582 to 620; these read DWQR…FEYE, RDMR…CELR, RDVN…MEES, GQVE…FETR, GQVE…FERK, SILF…LLEE, ATVK…FLET, LTRS…FEIR, EKLD…LEIK, KEFD…LEEN, GDED…FETD, SEFE…YESS, and ENKE…YESI.

This sequence belongs to the crooked-neck family. As to quaternary structure, associated with the spliceosome.

The protein localises to the nucleus. Functionally, involved in pre-mRNA splicing and cell cycle progression. Required for the spliceosome assembly and initiation of the DNA replication. In Eremothecium gossypii (strain ATCC 10895 / CBS 109.51 / FGSC 9923 / NRRL Y-1056) (Yeast), this protein is Pre-mRNA-splicing factor CLF1 (CLF1).